The primary structure comprises 222 residues: Glutathione S-transferase (222 aa).

The GST N-terminal domain occupies 3-83 (GKPKLHYTRG…YIAGKYNLYG (81 aa)). Residues Y9, R45, 54–55 (QV), and 67–68 (QS) each bind glutathione. The region spanning 85 to 208 (DLKERAWIDM…QPGSQRKPPL (124 aa)) is the GST C-terminal domain.

This sequence belongs to the GST superfamily. Alpha family. Homodimer.

It localises to the cytoplasm. It catalyses the reaction RX + glutathione = an S-substituted glutathione + a halide anion + H(+). Its function is as follows. Conjugation of reduced glutathione to a wide number of exogenous and endogenous hydrophobic electrophiles. The sequence is that of Glutathione S-transferase from Gallus gallus (Chicken).